The sequence spans 367 residues: Alanine racemase (367 aa).

The active-site Proton acceptor; specific for D-alanine is Lys40. Residue Lys40 is modified to N6-(pyridoxal phosphate)lysine. A substrate-binding site is contributed by Arg136. The active-site Proton acceptor; specific for L-alanine is the Tyr263. Met310 serves as a coordination point for substrate.

It belongs to the alanine racemase family. It depends on pyridoxal 5'-phosphate as a cofactor.

The enzyme catalyses L-alanine = D-alanine. Its pathway is amino-acid biosynthesis; D-alanine biosynthesis; D-alanine from L-alanine: step 1/1. In terms of biological role, catalyzes the interconversion of L-alanine and D-alanine. May also act on other amino acids. The protein is Alanine racemase (alr) of Streptococcus pneumoniae (strain Hungary19A-6).